The primary structure comprises 178 residues: M-phase-specific PLK1-interacting protein (178 aa).

Pro residues predominate over residues 1-15 (MHRPNFRPPTPPYPS). The tract at residues 1–134 (MHRPNFRPPT…RGREKRMSNE (134 aa)) is disordered. The segment covering 17-34 (GIGGWGGGNNFRGALGGG) has biased composition (gly residues). An Asymmetric dimethylarginine modification is found at Arg36. Residues Ser39 and Ser46 each carry the phosphoserine modification. A Phosphothreonine modification is found at Thr50. Arg56 carries the post-translational modification Omega-N-methylarginine. Asymmetric dimethylarginine is present on residues Arg58, Arg67, and Arg76. The span at 78–96 (GSPSPGGYPGSYSRSPAGS) shows a compositional bias: low complexity. Phosphoserine occurs at positions 79, 81, 92, 103, and 114. Positions 97 to 121 (QHQFGYSPGQQQTYPQGSPRTSTPF) are enriched in polar residues. Residue Arg116 is modified to Omega-N-methylarginine. Position 119 is a phosphothreonine (Thr119). Ser123 and Ser132 each carry phosphoserine.

In terms of assembly, interacts with PLK1; phosphorylation-dependent. In terms of processing, phosphorylated during mitosis in the cell cycle probably by CDK1.

The protein resides in the nucleus. Its subcellular location is the cytoplasm. It localises to the cytoskeleton. The protein localises to the microtubule organizing center. It is found in the centrosome. Its function is as follows. May play a role in maintenance of cell cycle integrity by regulating mitosis or cytokinesis. The sequence is that of M-phase-specific PLK1-interacting protein (Mplkip) from Mus musculus (Mouse).